The following is a 199-amino-acid chain: Recombination protein RecR (199 aa).

Residues 57–72 (CEICGNMDTKNICHIC) form a C4-type zinc finger. Positions 80–175 (STIAIVETVA…KISRLASGIP (96 aa)) constitute a Toprim domain.

This sequence belongs to the RecR family.

May play a role in DNA repair. It seems to be involved in an RecBC-independent recombinational process of DNA repair. It may act with RecF and RecO. The chain is Recombination protein RecR from Rickettsia typhi (strain ATCC VR-144 / Wilmington).